A 313-amino-acid chain; its full sequence is Ribosomal protein L11 methyltransferase (313 aa).

Residues Thr-154, Gly-179, Asp-201, and Asn-242 each coordinate S-adenosyl-L-methionine.

It belongs to the methyltransferase superfamily. PrmA family.

It localises to the cytoplasm. It carries out the reaction L-lysyl-[protein] + 3 S-adenosyl-L-methionine = N(6),N(6),N(6)-trimethyl-L-lysyl-[protein] + 3 S-adenosyl-L-homocysteine + 3 H(+). Methylates ribosomal protein L11. The protein is Ribosomal protein L11 methyltransferase of Xanthomonas oryzae pv. oryzae (strain MAFF 311018).